A 583-amino-acid chain; its full sequence is Aspartate--tRNA ligase (583 aa).

Residue Glu-174 coordinates L-aspartate. An aspartate region spans residues 198–201 (QITK). Residue Arg-220 participates in L-aspartate binding. ATP is bound by residues 220 to 222 (RDE) and Gln-229. An L-aspartate-binding site is contributed by His-443. Glu-477 is a binding site for ATP. L-aspartate is bound at residue Arg-484. 529 to 532 (GLDR) provides a ligand contact to ATP.

Belongs to the class-II aminoacyl-tRNA synthetase family. Type 1 subfamily. In terms of assembly, homodimer.

The protein resides in the cytoplasm. It carries out the reaction tRNA(Asp) + L-aspartate + ATP = L-aspartyl-tRNA(Asp) + AMP + diphosphate. In terms of biological role, catalyzes the attachment of L-aspartate to tRNA(Asp) in a two-step reaction: L-aspartate is first activated by ATP to form Asp-AMP and then transferred to the acceptor end of tRNA(Asp). This Streptococcus thermophilus (strain ATCC BAA-491 / LMD-9) protein is Aspartate--tRNA ligase.